Here is a 353-residue protein sequence, read N- to C-terminus: Protein RecA (353 aa).

An ATP-binding site is contributed by 67 to 74; sequence GPESSGKT.

The protein belongs to the RecA family.

It localises to the cytoplasm. Its function is as follows. Can catalyze the hydrolysis of ATP in the presence of single-stranded DNA, the ATP-dependent uptake of single-stranded DNA by duplex DNA, and the ATP-dependent hybridization of homologous single-stranded DNAs. It interacts with LexA causing its activation and leading to its autocatalytic cleavage. The protein is Protein RecA of Shewanella woodyi (strain ATCC 51908 / MS32).